Here is a 538-residue protein sequence, read N- to C-terminus: D-alanyl-D-alanine carboxypeptidase (538 aa).

The disordered stretch occupies residues 1-21; sequence MKQSSPEPLRPRRTGGRGGAR. The N-terminal stretch at 1–49 is a signal peptide; that stretch reads MKQSSPEPLRPRRTGGRGGARRAAALVTIPLLPMTLLGASPALADASGA. Ser98 functions as the Acyl-ester intermediate in the catalytic mechanism. Lys101 serves as the catalytic Proton acceptor. The segment at 146–319 is absent in class-A beta-lactamases; it reads TLSAEDLDAM…KGDVGLGGVP (174 aa). Residue Ser347 is part of the active site. Lys459 is a binding site for substrate. Positions 516–538 are cleaved as a propeptide — removed in mature form; that stretch reads GARMMRGPVQGSGELECSWVQAC.

Belongs to the peptidase S13 family.

Its subcellular location is the secreted. The enzyme catalyses Preferential cleavage: (Ac)2-L-Lys-D-Ala-|-D-Ala. Also transpeptidation of peptidyl-alanyl moieties that are N-acyl substituents of D-alanine.. It participates in cell wall biogenesis; peptidoglycan biosynthesis. With respect to regulation, inhibited by benzylpenicillin, cephaloridine, ampicillin and cetiofur. Functionally, removes C-terminal D-alanyl residues from sugar-peptide cell wall precursors. The polypeptide is D-alanyl-D-alanine carboxypeptidase (dac) (Actinomadura sp. (strain R39)).